The primary structure comprises 82 residues: Small ribosomal subunit protein uS17 (82 aa).

It belongs to the universal ribosomal protein uS17 family. As to quaternary structure, part of the 30S ribosomal subunit.

Its function is as follows. One of the primary rRNA binding proteins, it binds specifically to the 5'-end of 16S ribosomal RNA. This is Small ribosomal subunit protein uS17 from Nitrobacter hamburgensis (strain DSM 10229 / NCIMB 13809 / X14).